The sequence spans 353 residues: Photosystem II protein D1 (353 aa).

The residue at position 2 (T2) is an N-acetylthreonine. T2 is subject to Phosphothreonine. The next 3 helical transmembrane spans lie at 29–46, 118–133, and 142–156; these read YIGW…TATS, HFLL…EWEL, and WIVV…AATA. H118 contacts chlorophyll a. Y126 serves as a coordination point for pheophytin a. [CaMn4O5] cluster is bound by residues D170 and E189. A helical membrane pass occupies residues 197-218; sequence FHMLGVAGVFGGSLFSAMHGSL. H198 is a chlorophyll a binding site. Residues H215 and 264-265 contribute to the a quinone site; that span reads SF. Position 215 (H215) interacts with Fe cation. A Fe cation-binding site is contributed by H272. Residues 274–288 traverse the membrane as a helical segment; the sequence is FLAAWPVVGIWFTAL. [CaMn4O5] cluster is bound by residues H332, E333, D342, and A344. Positions 345-353 are excised as a propeptide; that stretch reads AVDAPSISG.

It belongs to the reaction center PufL/M/PsbA/D family. As to quaternary structure, PSII is composed of 1 copy each of membrane proteins PsbA, PsbB, PsbC, PsbD, PsbE, PsbF, PsbH, PsbI, PsbJ, PsbK, PsbL, PsbM, PsbT, PsbX, PsbY, PsbZ, Psb30/Ycf12, at least 3 peripheral proteins of the oxygen-evolving complex and a large number of cofactors. It forms dimeric complexes. Requires The D1/D2 heterodimer binds P680, chlorophylls that are the primary electron donor of PSII, and subsequent electron acceptors. It shares a non-heme iron and each subunit binds pheophytin, quinone, additional chlorophylls, carotenoids and lipids. D1 provides most of the ligands for the Mn4-Ca-O5 cluster of the oxygen-evolving complex (OEC). There is also a Cl(-1) ion associated with D1 and D2, which is required for oxygen evolution. The PSII complex binds additional chlorophylls, carotenoids and specific lipids. as cofactor. In terms of processing, tyr-161 forms a radical intermediate that is referred to as redox-active TyrZ, YZ or Y-Z. Post-translationally, C-terminally processed by CTPA; processing is essential to allow assembly of the oxygen-evolving complex and thus photosynthetic growth.

Its subcellular location is the plastid. The protein localises to the chloroplast thylakoid membrane. The catalysed reaction is 2 a plastoquinone + 4 hnu + 2 H2O = 2 a plastoquinol + O2. Its function is as follows. Photosystem II (PSII) is a light-driven water:plastoquinone oxidoreductase that uses light energy to abstract electrons from H(2)O, generating O(2) and a proton gradient subsequently used for ATP formation. It consists of a core antenna complex that captures photons, and an electron transfer chain that converts photonic excitation into a charge separation. The D1/D2 (PsbA/PsbD) reaction center heterodimer binds P680, the primary electron donor of PSII as well as several subsequent electron acceptors. In Vicia faba (Broad bean), this protein is Photosystem II protein D1.